A 214-amino-acid polypeptide reads, in one-letter code: Outer-membrane lipoprotein LolB (214 aa).

Positions 1–25 are cleaved as a signal peptide; that stretch reads MNNLKRFTKSIFSCIALSGLLFLGG. A lipid anchor (N-palmitoyl cysteine) is attached at Cys-26. Residue Cys-26 is the site of S-diacylglycerol cysteine attachment.

It belongs to the LolB family. Monomer.

It is found in the cell outer membrane. Its function is as follows. Plays a critical role in the incorporation of lipoproteins in the outer membrane after they are released by the LolA protein. The sequence is that of Outer-membrane lipoprotein LolB from Shewanella sp. (strain MR-7).